Reading from the N-terminus, the 155-residue chain is Ribosomal RNA large subunit methyltransferase H (155 aa).

S-adenosyl-L-methionine contacts are provided by residues Leu72, Gly104, and 123–128 (LAKITL).

It belongs to the RNA methyltransferase RlmH family. In terms of assembly, homodimer.

The protein localises to the cytoplasm. The catalysed reaction is pseudouridine(1915) in 23S rRNA + S-adenosyl-L-methionine = N(3)-methylpseudouridine(1915) in 23S rRNA + S-adenosyl-L-homocysteine + H(+). Specifically methylates the pseudouridine at position 1915 (m3Psi1915) in 23S rRNA. The polypeptide is Ribosomal RNA large subunit methyltransferase H (Mycoplasma capricolum subsp. capricolum (strain California kid / ATCC 27343 / NCTC 10154)).